We begin with the raw amino-acid sequence, 622 residues long: Dynein axonemal assembly factor 1 (622 aa).

The segment at 1-80 is disordered; it reads MHPEVSEPQA…ARNDRDDRGP (80 aa). Over residues 22-42 the composition is skewed to basic and acidic residues; it reads AGDHGRAGPGVRKEEINETKE. Residues 48–59 show a composition bias toward low complexity; that stretch reads STTSCQSQKQQS. Residues 62–80 show a composition bias toward basic and acidic residues; the sequence is SRLDCRSGYARNDRDDRGP. LRR repeat units follow at residues 101–123, 124–145, 146–167, 168–189, 190–211, and 215–236; these read ALNDTLYLHFKGFDRIENLEEYT, GLRCLWLECNGIQRIENLQAQS, ELRCLFLQVNLLHKIENLEPLQ, KLDALNLSNNYIKTIENLSCLP, VLNTLQMAHNRLETVADIQHLR, and RLCVLDLSHNMLSDPEILSVLE. Residues 249–288 form the LRRCT domain; it reads NPVTKHIPNYRRTVTVRLKQLTYLDDRPVFPKDRACAEAW. The span at 326–336 shows a compositional bias: basic and acidic residues; it reads EERKKARDKGE. A disordered region spans residues 326–360; the sequence is EERKKARDKGETPLPDSEESSSTSPEAQDKPPLGE. Residues 337 to 351 show a composition bias toward low complexity; sequence TPLPDSEESSSTSPE. 3 positions are modified to phosphoserine: S349, S464, and S487. Disordered regions lie at residues 481-503 and 540-622; these read SSLSDDSDPELNDSPLPMLEHTP and LETQ…FGLD. The segment covering 540–550 has biased composition (polar residues); the sequence is LETQGQVFSTT.

Belongs to the DNAAF1 family.

The protein localises to the cell projection. It is found in the cilium. Functionally, cilium-specific protein required for the stability of the ciliary architecture. Plays a role in cytoplasmic preassembly of dynein arms. Involved in regulation of microtubule-based cilia and actin-based brush border microvilli. This Peromyscus leucopus (White-footed mouse) protein is Dynein axonemal assembly factor 1 (Dnaaf1).